We begin with the raw amino-acid sequence, 279 residues long: Acyl-[acyl-carrier-protein]--UDP-N-acetylglucosamine O-acyltransferase (279 aa).

Residues 256–279 are disordered; that stretch reads IERGADKDALQDESVEKEGALVES.

Belongs to the transferase hexapeptide repeat family. LpxA subfamily. As to quaternary structure, homotrimer.

The protein localises to the cytoplasm. The catalysed reaction is a (3R)-hydroxyacyl-[ACP] + UDP-N-acetyl-alpha-D-glucosamine = a UDP-3-O-[(3R)-3-hydroxyacyl]-N-acetyl-alpha-D-glucosamine + holo-[ACP]. It functions in the pathway glycolipid biosynthesis; lipid IV(A) biosynthesis; lipid IV(A) from (3R)-3-hydroxytetradecanoyl-[acyl-carrier-protein] and UDP-N-acetyl-alpha-D-glucosamine: step 1/6. Involved in the biosynthesis of lipid A, a phosphorylated glycolipid that anchors the lipopolysaccharide to the outer membrane of the cell. The protein is Acyl-[acyl-carrier-protein]--UDP-N-acetylglucosamine O-acyltransferase of Chlamydia caviae (strain ATCC VR-813 / DSM 19441 / 03DC25 / GPIC) (Chlamydophila caviae).